Consider the following 123-residue polypeptide: Small ribosomal subunit protein uS12 (123 aa).

At Asp-89 the chain carries 3-methylthioaspartic acid.

The protein belongs to the universal ribosomal protein uS12 family. In terms of assembly, part of the 30S ribosomal subunit. Contacts proteins S8 and S17. May interact with IF1 in the 30S initiation complex.

In terms of biological role, with S4 and S5 plays an important role in translational accuracy. Functionally, interacts with and stabilizes bases of the 16S rRNA that are involved in tRNA selection in the A site and with the mRNA backbone. Located at the interface of the 30S and 50S subunits, it traverses the body of the 30S subunit contacting proteins on the other side and probably holding the rRNA structure together. The combined cluster of proteins S8, S12 and S17 appears to hold together the shoulder and platform of the 30S subunit. This is Small ribosomal subunit protein uS12 from Bartonella bacilliformis (strain ATCC 35685 / KC583 / Herrer 020/F12,63).